Here is a 174-residue protein sequence, read N- to C-terminus: Micrococcal nuclease (174 aa).

The N-terminal stretch at 1 to 23 (MKSALAALRAVAAAVVLIVSVPA) is a signal peptide. Catalysis depends on residues R52, E60, and R94.

It belongs to the thermonuclease family.

The catalysed reaction is Endonucleolytic cleavage to nucleoside 3'-phosphates and 3'-phosphooligonucleotide end-products.. This chain is Micrococcal nuclease (nuc), found in Shigella flexneri.